A 121-amino-acid polypeptide reads, in one-letter code: Basic phospholipase A2 (121 aa).

Cystine bridges form between Cys26–Cys114, Cys28–Cys44, Cys43–Cys94, Cys49–Cys121, Cys50–Cys87, Cys57–Cys80, and Cys74–Cys85. Positions 27, 29, and 31 each coordinate Ca(2+). His47 is an active-site residue. Asp48 serves as a coordination point for Ca(2+). The active site involves Asp88.

Homopentamer. It depends on Ca(2+) as a cofactor. In terms of tissue distribution, expressed by the venom gland.

It localises to the secreted. The enzyme catalyses a 1,2-diacyl-sn-glycero-3-phosphocholine + H2O = a 1-acyl-sn-glycero-3-phosphocholine + a fatty acid + H(+). Snake venom phospholipase A2 (PLA2) that displays moderate myotoxic activity in vivo, and cytotoxic activity in vitro. In vitro, shows anticoagulant activity on human plasma and in mice causes inflammatory cell infiltration and myonecrosis in the gastrocnemius muscles of CD-1 mice 3 hours after injection (100 ug). PLA2 catalyzes the calcium-dependent hydrolysis of the 2-acyl groups in 3-sn-phosphoglycerides. This is Basic phospholipase A2 from Porthidium ophryomegas (Slender hognose viper).